The sequence spans 142 residues: Protein archease (142 aa).

Ca(2+) contacts are provided by D12, D141, and I142.

It belongs to the archease family. As to quaternary structure, in solution, exists as a monomer, trimer and hexamer. Oligomeric states form a tripartite complex with tRNA and PAB1947 methyltransferase.

Activates the tRNA-splicing ligase complex by facilitating the enzymatic turnover of catalytic subunit RtcB. Acts by promoting the guanylylation of RtcB, a key intermediate step in tRNA ligation. Can also alter the NTP specificity of RtcB such that ATP, dGTP or ITP is used efficiently. Chaperone or modulator of proteins involved in DNA or RNA processing. Protects the tRNA (cytosine-5-)-methyltransferase PAB1947 against aggregation and increases its specificity. This chain is Protein archease, found in Pyrococcus abyssi (strain GE5 / Orsay).